The chain runs to 328 residues: Malate dehydrogenase (328 aa).

11–17 is an NAD(+) binding site; sequence GAAGQIG. Substrate is bound by residues Arg94 and Arg100. NAD(+) is bound by residues Asn107, Gln114, and 131–133; that span reads VGN. Residues Asn133 and Arg164 each coordinate substrate. His189 serves as the catalytic Proton acceptor.

This sequence belongs to the LDH/MDH superfamily. MDH type 2 family.

It carries out the reaction (S)-malate + NAD(+) = oxaloacetate + NADH + H(+). In terms of biological role, catalyzes the reversible oxidation of malate to oxaloacetate. The protein is Malate dehydrogenase of Xanthomonas axonopodis pv. citri (strain 306).